We begin with the raw amino-acid sequence, 1375 residues long: MAKASVELTRELQDSIRRCLSQGAVLQQHRVKLETKPKKFEDRVLALTSWRLHLFPLKVPAKVESSFNVLEIRAFNTLSQNQILVETERGTVSMRLPSAESVDQVTRHVSSALSKVCPGPGCLIRRGNADTPEGPRDTSPNSETSTSTTHSVCGGFSETYAALCDYNGLHCREEVQWDVDTIYHAEDNREFNLLDFSHLESRDLALMVAALAYNQWFTKLYCKDLRLGSEVLEQVLHTLSKSGSLEELVLDNAGLKTDFVQKLAGVFGENGSCVLHALILSHNPIEDKGFLSLSQQLLCFPTGLTKLCLAKTAISPRGLQALGQTFGANPAFASSLRYLDLSKNPGLLATDEANALYSFLAQPNALVHLDLSGTDCAVDMLLGALLHGCCSHLTYLNLARNSCSHRKGREAPPAFKQFFSSVYTLSHVNLSATRLPLEALRALLQGLSLNSHLSDLHLDLSSCELRSAGAQALQEQLGAVTCIGSLDLSDNGFDSDLLTLVPALGKNKSLKHLFLGKNFNVKAKTLEEILHKLVQLIQEEDCSLQSLSVADSRLKLRTSILINALGSNTCLAKVDLSGNGMEDIGAKMLSKALQINSSLRTILWDRNNTSALGFLDIARALESNHTLRFMSFPVSDISQAYRSAPERTEDVWQKIQWCLVRNNHSQTCPQEQAFRLQQGLVTSSAEQMLQRLCGRVQEEVRALRLCPLEPVQDELLYARDLIKDAKNSRALFPSLYELGHVLANDGPVRQRLESVASEVSKAVDKELQVILESMVSLTQELCPVAMRVAEGHNKMLSNVAERVTVPRNFIRGALLEQAGQDIQNKLDEVKLSVVTYLTNSIVDEILQELYHSHKSLARHLTQLRTLSDPPGGASQGQDPSSRGRGRNHDHEETDDELGTNIDTMAIKKQKRCRKIRPVSAFISGSPQDMESQLGSLGIPPGWFSGLGASQTTASGSWEGLSELPTHGYKLRHQTQGRPRPPRTTPPGPGRPSVPVPGPRQENGMATRLDEGLEDFFSRRVMDESSSYPRTLRTMRPGLSEPPLPPLQKKRRRGLFHFRRPRSFKGDRGPGSPTAGLLLPPPPPPPPTQESPPSPDPPSLGNNSSPCWSPEEESSLLPGFGGARGSSFCRKMGTERLEAGEGAPAPGTAQQPRVHGGVALPGLGRTKGWSFDGKREGTDPDQEDSTQAWQKRRSSDDAGPGAWKPPPPPQSSKPSFSAMRRAEATWHIAEESAANHSCQSPSPASQDGDEEKQGALFPERMVPTRNAKLQEPPIGPRPPKPVAVPRGRRAPQVPGGREETESSSAAPGANKPRLRLGSQQDQEEPEGQGPTDQGRRTAPLKPKRTRRAQSCDKLEPDRRQPPDPTGVCGTSEPGTD.

Residues 124–151 form a disordered region; that stretch reads IRRGNADTPEGPRDTSPNSETSTSTTHS. Low complexity predominate over residues 138 to 151; the sequence is TSPNSETSTSTTHS. LRR repeat units follow at residues 244–264, 274–295, 303–323, 335–357, 365–386, 392–413, 424–444, 455–475, 482–501, and 509–530; these read SLEE…QKLA, VLHA…SLSQ, GLTK…QALG, SLRY…NALY, ALVH…GALL, HLTY…EAPP, TLSH…RALL, DLHL…ALQE, CIGS…LTLV, and SLKH…EEIL. Disordered stretches follow at residues 864-901 and 969-1375; these read RTLS…GTNI and KLRH…PGTD. A compositionally biased stretch (pro residues) spans 981–997; it reads PRTTPPGPGRPSVPVPG. The segment covering 1007-1022 has biased composition (basic and acidic residues); it reads RLDEGLEDFFSRRVMD. Over residues 1047-1062 the composition is skewed to basic residues; it reads QKKRRRGLFHFRRPRS. Residues 1078–1097 show a composition bias toward pro residues; that stretch reads LPPPPPPPPTQESPPSPDPP. Positions 1098–1108 are enriched in low complexity; the sequence is SLGNNSSPCWS. Residues 1219-1229 show a composition bias toward basic and acidic residues; it reads RRAEATWHIAE. Residues 1233–1244 show a composition bias toward polar residues; it reads ANHSCQSPSPAS. Residues 1272 to 1281 are compositionally biased toward pro residues; that stretch reads PIGPRPPKPV. The segment covering 1348–1360 has biased composition (basic and acidic residues); that stretch reads QSCDKLEPDRRQP.

The protein belongs to the CARMIL family.

Its subcellular location is the cytoplasm. It localises to the cell membrane. The polypeptide is Capping protein, Arp2/3 and myosin-I linker protein 3 (Carmil3) (Mus musculus (Mouse)).